We begin with the raw amino-acid sequence, 334 residues long: Ornithine carbamoyltransferase (334 aa).

Carbamoyl phosphate-binding positions include 57 to 60 (STRT), Gln84, Arg108, and 135 to 138 (HPTQ). L-ornithine contacts are provided by residues Asn169, Asp233, and 237–238 (SM). Residues 275 to 276 (CL) and Arg320 each bind carbamoyl phosphate.

It belongs to the aspartate/ornithine carbamoyltransferase superfamily. OTCase family.

It is found in the cytoplasm. The catalysed reaction is carbamoyl phosphate + L-ornithine = L-citrulline + phosphate + H(+). It functions in the pathway amino-acid biosynthesis; L-arginine biosynthesis; L-arginine from L-ornithine and carbamoyl phosphate: step 1/3. Functionally, reversibly catalyzes the transfer of the carbamoyl group from carbamoyl phosphate (CP) to the N(epsilon) atom of ornithine (ORN) to produce L-citrulline. In Vibrio vulnificus (strain YJ016), this protein is Ornithine carbamoyltransferase.